The following is a 317-amino-acid chain: Peptidyl-prolyl cis-trans isomerase CYP26-2, chloroplastic (317 aa).

A disordered region spans residues 1 to 37; that stretch reads MMQPNAKLLSPSAKFLPSPIEPPQHNRRTTVGAPPSL. In terms of domain architecture, PPIase cyclophilin-type spans 95-311; sequence FIDVSIDGEP…SKVVVTNCGL (217 aa).

It belongs to the cyclophilin-type PPIase family. As to expression, ubiquitous. Lower levels of expression in roots.

It is found in the plastid. It localises to the chloroplast thylakoid. The catalysed reaction is [protein]-peptidylproline (omega=180) = [protein]-peptidylproline (omega=0). Its function is as follows. PPIases accelerate the folding of proteins. It catalyzes the cis-trans isomerization of proline imidic peptide bonds in oligopeptides. The sequence is that of Peptidyl-prolyl cis-trans isomerase CYP26-2, chloroplastic (CYP26-2) from Arabidopsis thaliana (Mouse-ear cress).